A 132-amino-acid polypeptide reads, in one-letter code: Prefoldin subunit alpha (132 aa).

Belongs to the prefoldin subunit alpha family. Heterohexamer of two alpha and four beta subunits.

Its subcellular location is the cytoplasm. In terms of biological role, molecular chaperone capable of stabilizing a range of proteins. Seems to fulfill an ATP-independent, HSP70-like function in archaeal de novo protein folding. The chain is Prefoldin subunit alpha (pfdA) from Pyrobaculum aerophilum (strain ATCC 51768 / DSM 7523 / JCM 9630 / CIP 104966 / NBRC 100827 / IM2).